A 343-amino-acid chain; its full sequence is Anthranilate phosphoribosyltransferase (343 aa).

5-phospho-alpha-D-ribose 1-diphosphate-binding positions include Gly-79, 82–83 (GD), Thr-87, 89–92 (NVST), 106–114 (KHGNRAASS), and Ser-118. Anthranilate is bound at residue Gly-79. Ser-91 lines the Mg(2+) pocket. Position 109 (Asn-109) interacts with anthranilate. Arg-164 is an anthranilate binding site. Mg(2+) contacts are provided by Asp-223 and Glu-224.

This sequence belongs to the anthranilate phosphoribosyltransferase family. As to quaternary structure, homodimer. Mg(2+) is required as a cofactor.

It carries out the reaction N-(5-phospho-beta-D-ribosyl)anthranilate + diphosphate = 5-phospho-alpha-D-ribose 1-diphosphate + anthranilate. The protein operates within amino-acid biosynthesis; L-tryptophan biosynthesis; L-tryptophan from chorismate: step 2/5. Functionally, catalyzes the transfer of the phosphoribosyl group of 5-phosphorylribose-1-pyrophosphate (PRPP) to anthranilate to yield N-(5'-phosphoribosyl)-anthranilate (PRA). The chain is Anthranilate phosphoribosyltransferase from Metallosphaera sedula (strain ATCC 51363 / DSM 5348 / JCM 9185 / NBRC 15509 / TH2).